Consider the following 374-residue polypeptide: Dual-specificity RNA methyltransferase RlmN (374 aa).

Catalysis depends on glutamate 94, which acts as the Proton acceptor. The 240-residue stretch at glutamate 100 to aspartate 339 folds into the Radical SAM core domain. Residues cysteine 107 and cysteine 344 are joined by a disulfide bond. 3 residues coordinate [4Fe-4S] cluster: cysteine 114, cysteine 118, and cysteine 121. Residues glycine 168–glutamate 169, serine 200, serine 222–histidine 224, and asparagine 301 contribute to the S-adenosyl-L-methionine site. Cysteine 344 functions as the S-methylcysteine intermediate in the catalytic mechanism.

This sequence belongs to the radical SAM superfamily. RlmN family. [4Fe-4S] cluster serves as cofactor.

It localises to the cytoplasm. It carries out the reaction adenosine(2503) in 23S rRNA + 2 reduced [2Fe-2S]-[ferredoxin] + 2 S-adenosyl-L-methionine = 2-methyladenosine(2503) in 23S rRNA + 5'-deoxyadenosine + L-methionine + 2 oxidized [2Fe-2S]-[ferredoxin] + S-adenosyl-L-homocysteine. It catalyses the reaction adenosine(37) in tRNA + 2 reduced [2Fe-2S]-[ferredoxin] + 2 S-adenosyl-L-methionine = 2-methyladenosine(37) in tRNA + 5'-deoxyadenosine + L-methionine + 2 oxidized [2Fe-2S]-[ferredoxin] + S-adenosyl-L-homocysteine. In terms of biological role, specifically methylates position 2 of adenine 2503 in 23S rRNA and position 2 of adenine 37 in tRNAs. m2A2503 modification seems to play a crucial role in the proofreading step occurring at the peptidyl transferase center and thus would serve to optimize ribosomal fidelity. This chain is Dual-specificity RNA methyltransferase RlmN, found in Vibrio vulnificus (strain CMCP6).